A 200-amino-acid chain; its full sequence is Protein Rv0461 (200 aa).

Residues aspartate 47 to valine 67 are disordered. 3 consecutive transmembrane segments (helical) span residues phenylalanine 102 to tyrosine 122, valine 134 to valine 154, and leucine 159 to alanine 179.

Its subcellular location is the cell membrane. In Mycobacterium tuberculosis (strain ATCC 25618 / H37Rv), this protein is Protein Rv0461.